A 2218-amino-acid chain; its full sequence is RNA-directed RNA polymerase L (2218 aa).

Residues 26–288 (KLAFLVQTEP…VAEDNIEHLI (263 aa)) form an endonuclease region. Mn(2+)-binding residues include Glu51, Asp89, and Glu102. Lys115 is a catalytic residue. Residues 1174-1370 (LSMKLNVSLA…YMSDQLNKFV (197 aa)) enclose the RdRp catalytic domain. Residue Asp1332 coordinates Mg(2+).

Belongs to the Bunyavirales RNA polymerase family. Homomultimer; the oligomeric structure is essential for the polymerase activity. Interacts with nucleoprotein N. Interacts with protein Z; this interaction inhibits viral transcription and replication, Z partially blocks the product exit tunnel for the releasing nascent RNA product. It depends on Mn(2+) as a cofactor. Mg(2+) serves as cofactor.

Its subcellular location is the virion. It localises to the host cytoplasm. It carries out the reaction RNA(n) + a ribonucleoside 5'-triphosphate = RNA(n+1) + diphosphate. Functionally, RNA-dependent RNA polymerase, which is responsible for the replication and transcription of the viral RNA genome using antigenomic RNA as an intermediate. During transcription, synthesizes subgenomic RNAs and assures their capping by a cap-snatching mechanism, which involves the endonuclease activity cleaving the host capped pre-mRNAs. These short capped RNAs are then used as primers for viral transcription. The 3'-end of subgenomic mRNAs molecules are heterogeneous and not polyadenylated. The replicase function is to direct synthesis of antigenomic and genomic RNA which are encapsidated and non capped. As a consequence of the use of the same enzyme for both transcription and replication, these mechanisms need to be well coordinated. These processes may be regulated by proteins N and Z in a dose-dependent manner. Z protein inhibits the viral polymerase L und thus the viral transcription and RNA synthesis. This is RNA-directed RNA polymerase L from Lassa virus (strain Mouse/Sierra Leone/Josiah/1976) (LASV).